We begin with the raw amino-acid sequence, 81 residues long: MKTLLLTLVVVTIVCLDFGHTRICYNQQSSQPPTTKTCSEGQCYKKTWRDHRGTIIERGCACPNVKPGIQISCCTSDKCNG.

The signal sequence occupies residues 1-21; the sequence is MKTLLLTLVVVTIVCLDFGHT. Intrachain disulfides connect Cys-24–Cys-43, Cys-38–Cys-60, Cys-62–Cys-73, and Cys-74–Cys-79.

Belongs to the three-finger toxin family. Short-chain subfamily. Type I alpha-neurotoxin sub-subfamily. In terms of tissue distribution, expressed by the venom gland.

It localises to the secreted. In terms of biological role, binds and inhibits fetal (alpha-1-beta-1-gamma-delta/CHRNA1-CHRNB1-CHRNG-CHRND, IC(50)=1.4 nM), adult (alpha-1-beta-1-delta-epsilon/CHRNA1-CHRNB1-CHRND-CHRNE, IC(50)=12 nM) and neuronal alpha-7/CHRNA7 (IC(50)=400 nM) nicotinic acetylcholine receptors (nAChR) thereby impairing neuromuscular and neuronal transmissions. The sequence is that of Three-finger toxin A1 from Micrurus laticollaris (Balsas coral snake).